The following is a 535-amino-acid chain: Signal transduction histidine-protein kinase AfsQ2 (535 aa).

Residues 1 to 30 are Cytoplasmic-facing; the sequence is MTREHQGGTRGLAAARKGFWSGLRFTSLRL. The chain crosses the membrane as a helical span at residues 31–52; that stretch reads RLVLVFGLVALTAAVSASGIAY. Over 53 to 198 the chain is Extracellular; that stretch reads WLNREAVLTR…SLEPEAKDLN (146 aa). Residues 199 to 219 form a helical membrane-spanning segment; sequence SLAWSLGIATALALLGSALLA. The Cytoplasmic portion of the chain corresponds to 220–535; it reads QALATTVLKP…DRGKDAKGQV (316 aa). The HAMP domain maps to 224-276; the sequence is TTVLKPVHRLGVAARRLGEGKLDTRLRVSGTDELADLSRTFNSAAENLEKRVA. In terms of domain architecture, Histidine kinase spans 291-510; the sequence is DMSHELRTPL…VFTLRLPQDP (220 aa). Phosphohistidine is present on His294. Residues 493–535 form a disordered region; the sequence is ENAPEGGAVFTLRLPQDPSPPADEDGGPDEETEDRGKDAKGQV. Residues 514-525 show a composition bias toward acidic residues; that stretch reads ADEDGGPDEETE. Over residues 526–535 the composition is skewed to basic and acidic residues; it reads DRGKDAKGQV.

The protein resides in the cell membrane. It carries out the reaction ATP + protein L-histidine = ADP + protein N-phospho-L-histidine.. In terms of biological role, forms part of a two-component regulatory system AfsQ1/AfsQ2 involved in secondary metabolism. May activate AfsQ1 by phosphorylation. In Streptomyces coelicolor (strain ATCC BAA-471 / A3(2) / M145), this protein is Signal transduction histidine-protein kinase AfsQ2 (afsQ2).